The chain runs to 322 residues: Probable 2-oxoglutarate-dependent dioxygenase AOP1 (322 aa).

Positions 165–271 (TYYLTRLMKY…RYSTGLFSIP (107 aa)) constitute a Fe2OG dioxygenase domain. Residues H195, D197, and H252 each contribute to the Fe cation site. A 2-oxoglutarate-binding site is contributed by R262.

The protein belongs to the iron/ascorbate-dependent oxidoreductase family. Requires Fe(2+) as cofactor.

Probable 2-oxoglutarate-dependent dioxygenase that may be involved in glucosinolates biosynthesis. May play a role in the production of aliphatic glucosinolates. The chain is Probable 2-oxoglutarate-dependent dioxygenase AOP1 (AOP1) from Arabidopsis thaliana (Mouse-ear cress).